Consider the following 228-residue polypeptide: MCTKRSSLKGSLLLLLLISSLLLSRSVDSLPICPSGSVNCQVSLSDLFDRAVMLSHYIHSLSSEMFNEFDERYAQGRGFITKAINSCHTSSLSTPEDKGQAQQIHHEALLNLVLRVLRSWNEPLYHLVTEVRSMQEAPHTILLKAMEIEEQNKKLLEGMEKIVGQVHPGDRENEVYSVWSGLPSLQMADEDTRLFAFYNLLHCLRRDSHKIDNYLKLLKCRLIHDSNC.

An N-terminal signal peptide occupies residues 1-29; it reads MCTKRSSLKGSLLLLLLISSLLLSRSVDS. The cysteines at positions 33 and 40 are disulfide-linked. Residues Ser55, Ser63, and Ser119 each carry the phosphoserine modification. Intrachain disulfides connect Cys87/Cys203 and Cys220/Cys228.

Belongs to the somatotropin/prolactin family. Interacts with PRLR.

The protein resides in the secreted. Functionally, prolactin acts primarily on the mammary gland by promoting lactation. This chain is Prolactin (PRL), found in Isoodon macrourus (Short-nosed bandicoot).